Reading from the N-terminus, the 441-residue chain is MKQFSILIAGGGSTFTPGIILMLLDNLDKFPIRQIKMFDNDAERQAKIGEACAILLKEKAPQIKFSYSTNPEEAFTDIDFVMAHIRVGKYPMRELDEKIPLRHGVVGQETCGPGGIAYGMRSIGGVIGLIDYMEKYSPNAWMLNYSNPAAIVAEATRRLRPNSKVLNICDMPIGIEVRMAEILGLESRKDMDIMYYGLNHFGWWKSVRDKQGNDLMPKLREHVSQYGYVVPKGDNQHTEASWNDTFAKAKDVLALDPTTLPNTYLKYYLFPDYVVEHSNKEYTRANEVMDGREKFVFGECEKVVKNQSSEGCALHIDEHASYIVDLARAIAFNTKEKMLLIVENNGAIVNFDSTAMVEIPCIVGSNGPEPLVVGRIPQFQKGMMEQQVTVEKLTVEAWIEGSYQKLWQAITMSKTVPSAKVAKDILDDLIEANKEYWPVLK.

Position 4–70 (4–70) interacts with NAD(+); the sequence is FSILIAGGGS…PQIKFSYSTN (67 aa). Substrate contacts are provided by arginine 93 and asparagine 147. Residue cysteine 169 participates in Mn(2+) binding. The Proton donor role is filled by aspartate 170. Histidine 200 serves as a coordination point for Mn(2+). Tyrosine 264 functions as the Proton acceptor in the catalytic mechanism. Arginine 284 is a substrate binding site.

Belongs to the glycosyl hydrolase 4 family. Homotetramer. NAD(+) serves as cofactor. Mn(2+) is required as a cofactor. Requires Fe(2+) as cofactor. The cofactor is Co(2+). It depends on Ni(2+) as a cofactor.

It carries out the reaction alpha-maltose 6'-phosphate + H2O = D-glucose 6-phosphate + D-glucose. It participates in glycan degradation; maltose degradation. Functionally, hydrolyzes a wide variety of 6-phospho-alpha-D-glucosides including maltose-6'P, trehalose-6P and the 6'-phosphorylated derivatives of the five linkage-isomeric alpha-D-glucosyl-D-fructoses: trehalulose-6'P, turanose-6'P, maltulose-6'P, leucrose-6'P, and palatinose-6'P. However, sucrose-6P is not a substrate for MalH, and this enzyme also fails to hydrolyze beta-O-linked phosphorylated disaccharides such as cellobiose-6'P and gentobiose-6'P. This chain is Maltose-6'-phosphate glucosidase (malH), found in Fusobacterium mortiferum.